The primary structure comprises 143 residues: Ribonuclease P protein component 2 (143 aa).

It belongs to the eukaryotic/archaeal RNase P protein component 2 family. In terms of assembly, consists of a catalytic RNA component and at least 4-5 protein subunits.

The protein resides in the cytoplasm. It carries out the reaction Endonucleolytic cleavage of RNA, removing 5'-extranucleotides from tRNA precursor.. In terms of biological role, part of ribonuclease P, a protein complex that generates mature tRNA molecules by cleaving their 5'-ends. This is Ribonuclease P protein component 2 from Saccharolobus solfataricus (strain ATCC 35092 / DSM 1617 / JCM 11322 / P2) (Sulfolobus solfataricus).